The chain runs to 325 residues: Gibberellin 20-oxidase-like protein (325 aa).

Residues 152–266 (CHGYFRINNY…RFSLAFFWCF (115 aa)) enclose the Fe2OG dioxygenase domain. 3 residues coordinate Fe cation: His186, Asp188, and His244. Arg257 lines the 2-oxoglutarate pocket.

Belongs to the iron/ascorbate-dependent oxidoreductase family. GA20OX subfamily. Fe(2+) serves as cofactor. Highly expressed in elongation zone of lateral roots.

In terms of biological role, negative regulator of root hair growth. This Arabidopsis thaliana (Mouse-ear cress) protein is Gibberellin 20-oxidase-like protein.